The following is a 155-amino-acid chain: Peptide deformylase 2 (155 aa).

The Fe cation site is built by Cys90 and His132. The active site involves Glu133. His136 contributes to the Fe cation binding site.

Belongs to the polypeptide deformylase family. Fe(2+) serves as cofactor.

The catalysed reaction is N-terminal N-formyl-L-methionyl-[peptide] + H2O = N-terminal L-methionyl-[peptide] + formate. In terms of biological role, removes the formyl group from the N-terminal Met of newly synthesized proteins. Requires at least a dipeptide for an efficient rate of reaction. N-terminal L-methionine is a prerequisite for activity but the enzyme has broad specificity at other positions. In Clostridium perfringens (strain 13 / Type A), this protein is Peptide deformylase 2.